Reading from the N-terminus, the 309-residue chain is Solute carrier family 25 member 48 (309 aa).

3 Solcar repeats span residues 3–86 (VFQL…TQRL), 99–209 (CSML…FCNW), and 218–305 (PPPC…SLQF). 6 helical membrane passes run 9–29 (FLAG…LDTV), 61–81 (GLSF…GFFS), 105–125 (TVAS…VDLV), 186–206 (GAMI…YTLF), 218–238 (PPPC…WVTA), and 281–299 (ATVN…FLGY).

The protein belongs to the mitochondrial carrier (TC 2.A.29) family.

It localises to the mitochondrion inner membrane. The protein is Solute carrier family 25 member 48 (slc25a48) of Danio rerio (Zebrafish).